A 249-amino-acid polypeptide reads, in one-letter code: 2,3-bisphosphoglycerate-dependent phosphoglycerate mutase (249 aa).

Substrate is bound by residues Arg8–Asn15, Thr21–Gly22, Arg60, Glu87–Tyr90, Lys98, Arg114–Arg115, and Gly183–Asn184. His9 functions as the Tele-phosphohistidine intermediate in the catalytic mechanism. Glu87 acts as the Proton donor/acceptor in catalysis.

It belongs to the phosphoglycerate mutase family. BPG-dependent PGAM subfamily.

The enzyme catalyses (2R)-2-phosphoglycerate = (2R)-3-phosphoglycerate. It functions in the pathway carbohydrate degradation; glycolysis; pyruvate from D-glyceraldehyde 3-phosphate: step 3/5. Functionally, catalyzes the interconversion of 2-phosphoglycerate and 3-phosphoglycerate. The chain is 2,3-bisphosphoglycerate-dependent phosphoglycerate mutase from Methanoregula boonei (strain DSM 21154 / JCM 14090 / 6A8).